Consider the following 121-residue polypeptide: MSLTNEQIVDAIAEKSLMEVMELVKAIEEKFGVSAAAPVAAAAAGPAAVVEEQTEFTVVLTSPGANKVAAIKAVRGVTGLGLKEAKDLTEAGGILKEGVSKDEAEKIKKEMTEAGATVEVK.

This sequence belongs to the bacterial ribosomal protein bL12 family. Homodimer. Part of the ribosomal stalk of the 50S ribosomal subunit. Forms a multimeric L10(L12)X complex, where L10 forms an elongated spine to which 2 to 4 L12 dimers bind in a sequential fashion. Binds GTP-bound translation factors.

Its function is as follows. Forms part of the ribosomal stalk which helps the ribosome interact with GTP-bound translation factors. Is thus essential for accurate translation. The polypeptide is Large ribosomal subunit protein bL12 (Xanthomonas campestris pv. campestris (strain B100)).